The following is a 716-amino-acid chain: Calpain clp-4 (716 aa).

The interval 31–53 (DDDDKQEAPVAVSKAPKGKGSNH) is disordered. The 297-residue stretch at 240–536 (LFEDPEFPAT…FTQMEVCNLT (297 aa)) folds into the Calpain catalytic domain. Residues cysteine 295, histidine 452, and asparagine 476 contribute to the active site.

This sequence belongs to the peptidase C2 family.

In terms of biological role, calcium-regulated non-lysosomal thiol-protease which catalyzes limited proteolysis of substrates. Promotes starvation-induced muscle atrophy. The sequence is that of Calpain clp-4 from Caenorhabditis elegans.